Reading from the N-terminus, the 87-residue chain is MSERNQRKVYVGRVVSDKMDKTITVLVETYKKHPLYGKRVKYSKKYKAHDENNIAKVGDIVKIMETRPLSATKRFRLVEIVEKAVIV.

This sequence belongs to the universal ribosomal protein uS17 family. As to quaternary structure, part of the 30S ribosomal subunit.

Functionally, one of the primary rRNA binding proteins, it binds specifically to the 5'-end of 16S ribosomal RNA. The polypeptide is Small ribosomal subunit protein uS17 (Geobacillus sp. (strain WCH70)).